The primary structure comprises 160 residues: Sperm protein associated with the nucleus on the X chromosome N2 (160 aa).

Disordered regions lie at residues 1-48 (MEKP…TSEY) and 64-160 (SNQL…GEED). Basic and acidic residues predominate over residues 10 to 35 (GEKRKSPCDSNNRNDEMQETPNRDLA). Residues 64–79 (SNQLENDQSQENSVNP) show a composition bias toward polar residues. Positions 81 to 97 (QEEEDEGSSQEDEDLDS) are enriched in acidic residues. A compositionally biased stretch (basic and acidic residues) spans 136-148 (SSERSSQEEKDPD).

This sequence belongs to the SPAN-X family.

This is Sperm protein associated with the nucleus on the X chromosome N2 (SPANXN2) from Pongo pygmaeus (Bornean orangutan).